A 415-amino-acid chain; its full sequence is Metal tolerance protein 5 (415 aa).

Topologically, residues methionine 1 to leucine 124 are cytoplasmic. The helical transmembrane segment at alanine 125–valine 145 threads the bilayer. Topologically, residues arginine 146–leucine 150 are vacuolar. A helical transmembrane segment spans residues alanine 151–phenylalanine 171. The Cytoplasmic portion of the chain corresponds to threonine 172–glutamine 192. Residues proline 193–glutamate 213 form a helical membrane-spanning segment. Topologically, residues serine 214–glutamate 232 are vacuolar. A helical membrane pass occupies residues lysine 233 to cysteine 253. Topologically, residues arginine 254 to histidine 268 are cytoplasmic. A helical membrane pass occupies residues phenylalanine 269–tryptophan 291. Over isoleucine 292–aspartate 293 the chain is Vacuolar. Residues proline 294–leucine 313 traverse the membrane as a helical segment. The Cytoplasmic segment spans residues glutamate 314–lysine 415.

This sequence belongs to the cation diffusion facilitator (CDF) transporter (TC 2.A.4) family. SLC30A subfamily.

The protein localises to the vacuole membrane. In terms of biological role, involved in sequestration of excess metal in the cytoplasm into vacuoles to maintain metal homeostasis. The chain is Metal tolerance protein 5 (MTP5) from Oryza sativa subsp. japonica (Rice).